Consider the following 515-residue polypeptide: Tetratricopeptide repeat protein 8 (515 aa).

The TPR 1 repeat unit spans residues 4–37; that stretch reads EMEPLLRAWSYFRRRKFQLCADLCTQMLEKSPYD. Disordered stretches follow at residues 89 to 109 and 118 to 137; these read RPGTSLKLPGTNQTGGPTQAV and PITGFLRPSTQSGRPGTMEQ. TPR repeat units lie at residues 225–258, 259–291, 292–325, 326–359, 360–393, 397–430, and 432–464; these read WWWKVQIGKCYYRLGMYREAEKQFKSALKQQEMV, DTFLYLAKVYIILDQPVTALNLFKQGLDKFPGE, VTLLCGIARIYEEMNNSSSAAEYYKEVLKQDNTH, VEAIACIGSNHFYSDQPEVALRFYRRLLQMGVYN, CQLFNNLGLCCFYAQQYDMTLTSFERALSLAENE, ADVWYNLGHIAVGIGDTNLAHQCFRLALVHNNHH, and EAYNNLAVLEMRKGHVEQARALLQTASSLAPHM.

In terms of assembly, part of BBSome complex, that contains BBS1, BBS2, BBS4, BBS5, BBS7, BBS8/TTC8, BBS9 and BBIP10. Interacts with PCM1. Interacts with CCDC28B. Interacts with PKD1. In terms of tissue distribution, isoform 1 is retina-specific whereas isoform 2 is ubiquitously expressed.

The protein localises to the cytoplasm. It localises to the cytoskeleton. It is found in the microtubule organizing center. Its subcellular location is the centrosome. The protein resides in the centriole. The protein localises to the cell projection. It localises to the cilium membrane. It is found in the centriolar satellite. Its subcellular location is the cilium. In terms of biological role, the BBSome complex is thought to function as a coat complex required for sorting of specific membrane proteins to the primary cilia. The BBSome complex is required for ciliogenesis but is dispensable for centriolar satellite function. This ciliogenic function is mediated in part by the Rab8 GDP/GTP exchange factor, which localizes to the basal body and contacts the BBSome. Rab8(GTP) enters the primary cilium and promotes extension of the ciliary membrane. Firstly the BBSome associates with the ciliary membrane and binds to RAB3IP/Rabin8, the guanosyl exchange factor (GEF) for Rab8 and then the Rab8-GTP localizes to the cilium and promotes docking and fusion of carrier vesicles to the base of the ciliary membrane. The BBSome complex, together with the LTZL1, controls SMO ciliary trafficking and contributes to the sonic hedgehog (SHH) pathway regulation. Required for proper BBSome complex assembly and its ciliary localization. This Mus musculus (Mouse) protein is Tetratricopeptide repeat protein 8 (Ttc8).